The following is a 178-amino-acid chain: Caveolin-1 (178 aa).

N-acetylserine is present on Ser-2. The residue at position 2 (Ser-2) is a Phosphoserine. The interval 2-94 (SGGKYVDSEG…WKASFTTFTV (93 aa)) is required for homooligomerization. Over 2-104 (SGGKYVDSEG…TKYWFYRLLS (103 aa)) the chain is Cytoplasmic. Lys-5 bears the N6-acetyllysine; alternate mark. A Glycyl lysine isopeptide (Lys-Gly) (interchain with G-Cter in ubiquitin); alternate cross-link involves residue Lys-5. Tyr-6 carries the post-translational modification Phosphotyrosine. Phosphoserine is present on Ser-9. At Tyr-14 the chain carries Phosphotyrosine; by ABL1. Tyr-25 is modified (phosphotyrosine). Glycyl lysine isopeptide (Lys-Gly) (interchain with G-Cter in ubiquitin) cross-links involve residues Lys-26 and Lys-30. The residue at position 37 (Ser-37) is a Phosphoserine. Residues Lys-39, Lys-47, and Lys-57 each participate in a glycyl lysine isopeptide (Lys-Gly) (interchain with G-Cter in ubiquitin) cross-link. An interaction with CAVIN3 region spans residues 82–94 (DGIWKASFTTFTV). Positions 105 to 125 (ALFGIPMALIWGIYFAILSFL) form an intramembrane region, helical. Residues 126–178 (HIWAVVPCIKSFLIEIQCISRVYSIYVHTVCDPLFEAVGKIFSNVRINLQKEI) lie on the Cytoplasmic side of the membrane. Residues 131-142 (VPCIKSFLIEIQ) form an interacts with SPRY1, SPRY2, SPRY3 and SPRY4 region. Residues Cys-133, Cys-143, and Cys-156 are each lipidated (S-palmitoyl cysteine). The interacts with SPRY1, SPRY2, and SPRY4 stretch occupies residues 149–160 (SIYVHTVCDPLF). Positions 167–178 (FSNVRINLQKEI) are interacts with SPRY1, SPRY2, SPRY3 and SPRY4.

The protein belongs to the caveolin family. In terms of assembly, homooligomer. Interacts with GLIPR2. Interacts with NOSTRIN. Interacts with SNAP25 and STX1A. Interacts (via the N-terminus) with DPP4; the interaction is direct. Interacts with CTNNB1, CDH1 and JUP. Interacts with PACSIN2; this interaction induces membrane tubulation. Interacts with SLC7A9. Interacts with BMX and BTK. Interacts with TGFBR1. Interacts with CAVIN3 (via leucine-zipper domain) in a cholesterol-sensitive manner. Interacts with CAVIN1. Interacts with EHD2 in a cholesterol-dependent manner. Forms a ternary complex with UBXN6 and VCP; mediates CAV1 targeting to lysosomes for degradation. Interacts with ABCG1; this interaction regulates ABCG1-mediated cholesterol efflux. Interacts with NEU3; this interaction enhances NEU3 sialidase activity within caveola. Interacts (via C-terminus) with SPRY1, SPRY2 (via C-terminus), SPRY3, and SPRY4. Interacts with IGFBP5; this interaction allows trafficking of IGFBP5 from the plasma membrane to the nucleus. Phosphorylated at Tyr-14 by ABL1 in response to oxidative stress. Post-translationally, ubiquitinated. Undergo monoubiquitination and multi- and/or polyubiquitination. Monoubiquitination of N-terminal lysines promotes integration in a ternary complex with UBXN6 and VCP which promotes oligomeric CAV1 targeting to lysosomes for degradation. Ubiquitinated by ZNRF1; leading to degradation and modulation of the TLR4-mediated immune response.

It is found in the golgi apparatus membrane. The protein resides in the cell membrane. It localises to the membrane. Its subcellular location is the caveola. The protein localises to the membrane raft. Its function is as follows. May act as a scaffolding protein within caveolar membranes. Forms a stable heterooligomeric complex with CAV2 that targets to lipid rafts and drives caveolae formation. Mediates the recruitment of CAVIN proteins (CAVIN1/2/3/4) to the caveolae. Interacts directly with G-protein alpha subunits and can functionally regulate their activity. Involved in the costimulatory signal essential for T-cell receptor (TCR)-mediated T-cell activation. Its binding to DPP4 induces T-cell proliferation and NF-kappa-B activation in a T-cell receptor/CD3-dependent manner. Recruits CTNNB1 to caveolar membranes and may regulate CTNNB1-mediated signaling through the Wnt pathway. Negatively regulates TGFB1-mediated activation of SMAD2/3 by mediating the internalization of TGFBR1 from membrane rafts leading to its subsequent degradation. Binds 20(S)-hydroxycholesterol (20(S)-OHC). The polypeptide is Caveolin-1 (CAV1) (Pongo abelii (Sumatran orangutan)).